The chain runs to 393 residues: S-adenosylmethionine synthase (393 aa).

H17 is a binding site for ATP. Residue D19 coordinates Mg(2+). Residue E45 participates in K(+) binding. L-methionine contacts are provided by E58 and Q106. Residues 106 to 116 are flexible loop; it reads QSAHIAQGVDA. Residues 171-173, 237-238, D246, 252-253, A269, and K273 each bind ATP; these read DAK, KF, and RK. An L-methionine-binding site is contributed by D246. Residue K277 coordinates L-methionine.

This sequence belongs to the AdoMet synthase family. As to quaternary structure, homotetramer; dimer of dimers. The cofactor is Mg(2+). Requires K(+) as cofactor.

It is found in the cytoplasm. It carries out the reaction L-methionine + ATP + H2O = S-adenosyl-L-methionine + phosphate + diphosphate. Its pathway is amino-acid biosynthesis; S-adenosyl-L-methionine biosynthesis; S-adenosyl-L-methionine from L-methionine: step 1/1. In terms of biological role, catalyzes the formation of S-adenosylmethionine (AdoMet) from methionine and ATP. The overall synthetic reaction is composed of two sequential steps, AdoMet formation and the subsequent tripolyphosphate hydrolysis which occurs prior to release of AdoMet from the enzyme. This is S-adenosylmethionine synthase from Jannaschia sp. (strain CCS1).